The primary structure comprises 151 residues: Large ribosomal subunit protein uL13 (151 aa).

The protein belongs to the universal ribosomal protein uL13 family. In terms of assembly, part of the 50S ribosomal subunit.

In terms of biological role, this protein is one of the early assembly proteins of the 50S ribosomal subunit, although it is not seen to bind rRNA by itself. It is important during the early stages of 50S assembly. This is Large ribosomal subunit protein uL13 from Mycoplasma mycoides subsp. mycoides SC (strain CCUG 32753 / NCTC 10114 / PG1).